We begin with the raw amino-acid sequence, 385 residues long: MVLSKENMLKYSAHLRAYNSACGDHPELKSFDSELQQKTSNLINSFTSDAKTGLVPLPQHAAYKEFTKHLAEVNQQVSDYIIGYGEVVWENSTLRSLVETYFESAKKTLDIAENVTEYVDEAKRGERYIVAAVAQFEKDKENDVGKKTKRYENTLRELKKFEAMGNPFDGDKFTTLFKLMHKEQESLLERVRETKEKLDEELKNIEMEISSRKKWSIISNVLFIGAFVAVAVGSMVLVCTGVGAGVGVAGLLSLPLIAIGWVGVHTILENKIQAREKQEEALKKAHRIANEMDKGMETDKVDMNSISGKVHALKSKITSMLNAVKDATEDGANEVDTKQVMETLTGDVVELTEDIKAVGDDVAKYSKMIEETSYHVLQKITGSGK.

Positions 138–214 form a coiled coil; the sequence is KDKENDVGKK…IEMEISSRKK (77 aa). Helical transmembrane passes span 217-237 and 242-262; these read IISN…SMVL and VGAG…IGWV. Residues 267 to 294 are a coiled coil; the sequence is ILENKIQAREKQEEALKKAHRIANEMDK.

The protein belongs to the UPF0496 family. Widely expressed.

The protein localises to the membrane. The protein is UPF0496 protein At3g28290 of Arabidopsis thaliana (Mouse-ear cress).